The primary structure comprises 350 residues: Quinone oxidoreductase-like protein 2 (350 aa).

Lys36 carries the N6-acetyllysine modification. Residue Lys201 is modified to N6-succinyllysine. Residues Lys302 and Lys328 each carry the N6-acetyllysine modification.

The protein belongs to the zinc-containing alcohol dehydrogenase family. Quinone oxidoreductase subfamily.

The polypeptide is Quinone oxidoreductase-like protein 2 (Mus musculus (Mouse)).